Consider the following 298-residue polypeptide: Probable pyridoxal 5'-phosphate synthase subunit SNZ3 (298 aa).

Residue D21 participates in D-ribose 5-phosphate binding. The active-site Schiff-base intermediate with D-ribose 5-phosphate is the K78. D-ribose 5-phosphate contacts are provided by residues G150, G213, and G234 to S235.

It belongs to the PdxS/SNZ family. Homohexamer. Interacts with THI11.

The catalysed reaction is aldehydo-D-ribose 5-phosphate + D-glyceraldehyde 3-phosphate + L-glutamine = pyridoxal 5'-phosphate + L-glutamate + phosphate + 3 H2O + H(+). It functions in the pathway cofactor biosynthesis; pyridoxal 5'-phosphate biosynthesis. In terms of biological role, catalyzes the formation of pyridoxal 5'-phosphate from ribose 5-phosphate (RBP), glyceraldehyde 3-phosphate (G3P) and ammonia. The ammonia is provided by a SNO isoform. Can also use ribulose 5-phosphate and dihydroxyacetone phosphate as substrates, resulting from enzyme-catalyzed isomerization of RBP and G3P, respectively. The polypeptide is Probable pyridoxal 5'-phosphate synthase subunit SNZ3 (SNZ3) (Saccharomyces cerevisiae (strain ATCC 204508 / S288c) (Baker's yeast)).